Consider the following 209-residue polypeptide: Large ribosomal subunit protein uL3 (209 aa).

Residues 127–166 (NFGGGQRTHGQSDRLRAPGSIGGASDPSKTFKGTKMGGRM) are disordered.

It belongs to the universal ribosomal protein uL3 family. In terms of assembly, part of the 50S ribosomal subunit. Forms a cluster with proteins L14 and L19.

Its function is as follows. One of the primary rRNA binding proteins, it binds directly near the 3'-end of the 23S rRNA, where it nucleates assembly of the 50S subunit. This chain is Large ribosomal subunit protein uL3, found in Chlorobium phaeovibrioides (strain DSM 265 / 1930) (Prosthecochloris vibrioformis (strain DSM 265)).